A 182-amino-acid polypeptide reads, in one-letter code: Large ribosomal subunit protein bL17 (182 aa).

The interval 126–182 (ERANRVAASKAKKAEAEAAEAKAEEAEEAPEVEADTATDKAAEAEAAEAADEAAEDK) is disordered. Over residues 137 to 149 (KKAEAEAAEAKAE) the composition is skewed to basic and acidic residues. Composition is skewed to acidic residues over residues 150-161 (EAEEAPEVEADT) and 170-182 (EAAE…AEDK).

Belongs to the bacterial ribosomal protein bL17 family. As to quaternary structure, part of the 50S ribosomal subunit. Contacts protein L32.

In Corynebacterium jeikeium (strain K411), this protein is Large ribosomal subunit protein bL17.